The chain runs to 1372 residues: Serine protease pic autotransporter (1372 aa).

Positions 1-55 (MNKVYSLKYCPVTGGLIAVSELARRVIKKTCRRLTHILLAGIPAICLCYSQISQA) are cleaved as a signal peptide. One can recognise a Peptidase S6 domain in the interval 56 to 301 (GIVRSDIAYQ…NVIPTDYLNQ (246 aa)). Active-site charge relay system residues include histidine 127, aspartate 155, and serine 258. Residues 1106–1372 (DTNGDAGAWA…AVNANFRYMF (267 aa)) enclose the Autotransporter domain.

Post-translationally, cleaved to release the mature protein from the outer membrane.

The protein resides in the periplasm. It is found in the secreted. The protein localises to the cell surface. It localises to the cell outer membrane. Functionally, involved in intestinal colonization, displays in vitro mucinolytic activity, serum resistance, and hemagglutination. Important to penetrate the intestinal mucus layer. This chain is Serine protease pic autotransporter (pic), found in Shigella flexneri.